A 226-amino-acid chain; its full sequence is Methylamine utilization ferredoxin-type protein MauM (226 aa).

4 4Fe-4S ferredoxin-type domains span residues 59-87 (PEPE…LASW), 95-127 (TPYF…PLLT), 136-172 (VAVL…LKQI), and 180-211 (QIPT…LLPR). Positions 67, 70, 73, 77, 105, 108, 113, 117, 145, 153, 156, 160, 189, 192, 195, and 199 each coordinate [4Fe-4S] cluster.

It participates in one-carbon metabolism; methylamine degradation. In terms of biological role, involved in electron transfer. The chain is Methylamine utilization ferredoxin-type protein MauM (mauM) from Methylophilus methylotrophus (Bacterium W3A1).